Consider the following 256-residue polypeptide: Hydroxypyruvate/pyruvate aldolase (256 aa).

His48 functions as the Proton acceptor in the catalytic mechanism. Positions 152 and 178 each coordinate a divalent metal cation.

This sequence belongs to the HpcH/HpaI aldolase family. The cofactor is a divalent metal cation.

It catalyses the reaction D-glyceraldehyde + pyruvate = 2-dehydro-3-deoxy-L-galactonate. Aldolase which can catalyze in vitro the aldolisation reaction between hydroxypyruvate (HPA) or pyruvate (PA) and D-glyceraldehyde (D-GA). The condensation of pyruvate and D-glyceraldehyde produces 2-dehydro-3-deoxy-L-galactonate as the major product. Has weak activity with hydroxypyruvate and D-glyceraldehyde. This Roseobacter denitrificans (strain ATCC 33942 / OCh 114) (Erythrobacter sp. (strain OCh 114)) protein is Hydroxypyruvate/pyruvate aldolase.